A 342-amino-acid polypeptide reads, in one-letter code: S-adenosylmethionine:tRNA ribosyltransferase-isomerase (342 aa).

It belongs to the QueA family. Monomer.

The protein localises to the cytoplasm. It catalyses the reaction 7-aminomethyl-7-carbaguanosine(34) in tRNA + S-adenosyl-L-methionine = epoxyqueuosine(34) in tRNA + adenine + L-methionine + 2 H(+). Its pathway is tRNA modification; tRNA-queuosine biosynthesis. Transfers and isomerizes the ribose moiety from AdoMet to the 7-aminomethyl group of 7-deazaguanine (preQ1-tRNA) to give epoxyqueuosine (oQ-tRNA). This Listeria welshimeri serovar 6b (strain ATCC 35897 / DSM 20650 / CCUG 15529 / CIP 8149 / NCTC 11857 / SLCC 5334 / V8) protein is S-adenosylmethionine:tRNA ribosyltransferase-isomerase.